Here is a 357-residue protein sequence, read N- to C-terminus: Holliday junction branch migration complex subunit RuvB (357 aa).

Positions 1 to 27 (MGRFSNADGPGDDADEREVTPALTVGE) are disordered. The tract at residues 1–195 (MGRFSNADGP…FGFTAHMDFY (195 aa)) is large ATPase domain (RuvB-L). Residues Leu-34, Arg-35, Gly-76, Lys-79, Thr-80, Ser-81, 142–144 (EDF), Arg-185, Tyr-195, and Arg-232 contribute to the ATP site. Mg(2+) is bound at residue Thr-80. The interval 196–266 (EPAELERVLA…IAKYALEVYD (71 aa)) is small ATPAse domain (RuvB-S). The tract at residues 269–357 (ELGLDRLDRA…GGLGQVGLFE (89 aa)) is head domain (RuvB-H). DNA-binding residues include Arg-324 and Arg-329.

The protein belongs to the RuvB family. Homohexamer. Forms an RuvA(8)-RuvB(12)-Holliday junction (HJ) complex. HJ DNA is sandwiched between 2 RuvA tetramers; dsDNA enters through RuvA and exits via RuvB. An RuvB hexamer assembles on each DNA strand where it exits the tetramer. Each RuvB hexamer is contacted by two RuvA subunits (via domain III) on 2 adjacent RuvB subunits; this complex drives branch migration. In the full resolvosome a probable DNA-RuvA(4)-RuvB(12)-RuvC(2) complex forms which resolves the HJ.

Its subcellular location is the cytoplasm. It catalyses the reaction ATP + H2O = ADP + phosphate + H(+). In terms of biological role, the RuvA-RuvB-RuvC complex processes Holliday junction (HJ) DNA during genetic recombination and DNA repair, while the RuvA-RuvB complex plays an important role in the rescue of blocked DNA replication forks via replication fork reversal (RFR). RuvA specifically binds to HJ cruciform DNA, conferring on it an open structure. The RuvB hexamer acts as an ATP-dependent pump, pulling dsDNA into and through the RuvAB complex. RuvB forms 2 homohexamers on either side of HJ DNA bound by 1 or 2 RuvA tetramers; 4 subunits per hexamer contact DNA at a time. Coordinated motions by a converter formed by DNA-disengaged RuvB subunits stimulates ATP hydrolysis and nucleotide exchange. Immobilization of the converter enables RuvB to convert the ATP-contained energy into a lever motion, pulling 2 nucleotides of DNA out of the RuvA tetramer per ATP hydrolyzed, thus driving DNA branch migration. The RuvB motors rotate together with the DNA substrate, which together with the progressing nucleotide cycle form the mechanistic basis for DNA recombination by continuous HJ branch migration. Branch migration allows RuvC to scan DNA until it finds its consensus sequence, where it cleaves and resolves cruciform DNA. The chain is Holliday junction branch migration complex subunit RuvB from Mycolicibacterium gilvum (strain PYR-GCK) (Mycobacterium gilvum (strain PYR-GCK)).